We begin with the raw amino-acid sequence, 134 residues long: UPF0412 protein YaaI (134 aa).

Positions 1–23 are cleaved as a signal peptide; the sequence is MKSVFTISASLAISLMLCCTAQA.

Belongs to the UPF0412 family.

The chain is UPF0412 protein YaaI from Shigella dysenteriae serotype 1 (strain Sd197).